We begin with the raw amino-acid sequence, 253 residues long: Solute carrier family 66 member 2 (253 aa).

6 helical membrane passes run Gly7–Phe27, Phe49–Phe69, His72–Leu92, Phe125–Leu145, Ala150–Pro170, and Val214–Thr234. The PQ-loop 1 domain maps to His14–Gln80. The region spanning Ala160–Cys215 is the PQ-loop 2 domain.

It is found in the membrane. The sequence is that of Solute carrier family 66 member 2 (SLC66A2) from Bos taurus (Bovine).